Reading from the N-terminus, the 456-residue chain is Potassium voltage-gated channel subfamily A member 7 (456 aa).

A helical membrane pass occupies residues 144-164 (VLAVVSVLVILVSIVVFCLET). A glycan (N-linked (GlcNAc...) asparagine) is linked at Asn-191. A helical membrane pass occupies residues 209–229 (FFVVETLCICWFSFELLVRLL). Residue Cys-231 is the site of S-palmitoyl cysteine attachment. Residues 241-261 (VMNLIDFVAILPYFVALGTEL) form a helical membrane-spanning segment. A helical; Voltage-sensor transmembrane segment spans residues 276-295 (ILRVIRLVRVFRIFKLSRHS). A helical transmembrane segment spans residues 312-332 (LGLLIFFLFIGVVLFSSAVYF). The short motif at 358-363 (TVGYGD) is the Selectivity filter element. The helical transmembrane segment at 373–393 (IVGSLCAIAGVLTISLPVPVI) threads the bilayer.

It belongs to the potassium channel family. A (Shaker) (TC 1.A.1.2) subfamily. Kv1.7/KCNA7 sub-subfamily. As to quaternary structure, heterotetramer of potassium channel proteins. Highly expressed in skeletal muscle, heart and kidney.

Its subcellular location is the membrane. The catalysed reaction is K(+)(in) = K(+)(out). Mediates the voltage-dependent potassium ion permeability of excitable membranes. Assuming opened or closed conformations in response to the voltage difference across the membrane, the protein forms a potassium-selective channel through which potassium ions may pass in accordance with their electrochemical gradient. This Homo sapiens (Human) protein is Potassium voltage-gated channel subfamily A member 7 (KCNA7).